We begin with the raw amino-acid sequence, 298 residues long: MESENIISAADKARILAEALPYIRRFSGSVAVIKYGGNAMTEPALKEGFARDVVLLKLVGIHPVIVHGGGPQINAMLEKVGKKGEFVQGMRVTDKEAMDIVEMVLGGHVNKEIVSMINTYGGHAVGVSGRDDHFIKAKKLLIDTPEQNGVDIGQVGTVESIDTGLVKGLIERGCIPVVAPVGVGEKGEAFNINADLVAGKLAEELNAEKLLMMTNIAGVMDKTGNLLTKLTPKRIDELIADGTLYGGMLPKIASAVEAAVNGVKATHIIDGRVPNALLLEIFTDAGIGSMILGGGEDA.

Substrate is bound by residues 69 to 70 (GG), Arg91, and Asn191.

This sequence belongs to the acetylglutamate kinase family. ArgB subfamily.

The protein localises to the cytoplasm. The enzyme catalyses N-acetyl-L-glutamate + ATP = N-acetyl-L-glutamyl 5-phosphate + ADP. It functions in the pathway amino-acid biosynthesis; L-arginine biosynthesis; N(2)-acetyl-L-ornithine from L-glutamate: step 2/4. In terms of biological role, catalyzes the ATP-dependent phosphorylation of N-acetyl-L-glutamate. This chain is Acetylglutamate kinase, found in Neisseria meningitidis serogroup A / serotype 4A (strain DSM 15465 / Z2491).